Reading from the N-terminus, the 432-residue chain is uncharacterized protein (432 aa).

2 consecutive SIS domains span residues 105 to 244 (WLTE…DLVS) and 277 to 422 (CDKK…VDLP).

This is an uncharacterized protein from Saccharomyces cerevisiae (strain Lalvin EC1118 / Prise de mousse) (Baker's yeast).